The primary structure comprises 309 residues: Diacylglycerol kinase (309 aa).

One can recognise a DAGKc domain in the interval 9 to 140; the sequence is HEIGKVTALT…IDLGRIQDDN (132 aa). ATP contacts are provided by residues 19–23, 76–82, and T101; these read NPLSG and GDGVVSN. 3 residues coordinate Mg(2+): D226, D229, and L231. D285 (proton acceptor) is an active-site residue.

This sequence belongs to the diacylglycerol/lipid kinase family. Mg(2+) serves as cofactor.

Its subcellular location is the secreted. It is found in the cell wall. The enzyme catalyses a 1,2-diacyl-sn-glycerol + ATP = a 1,2-diacyl-sn-glycero-3-phosphate + ADP + H(+). It catalyses the reaction N-hexadecanoylsphing-4-enine + ATP = N-(hexadecanoyl)-sphing-4-enine-1-phosphate + ADP + H(+). Its function is as follows. Catalyzes the phosphorylation of diacylglycerol (DAG) into phosphatidic acid. Is involved in the biosynthesis of phosphatidylinositol mannosides (PIMs), probably via a role in the biosynthesis of phosphatidylinositol (PI), a PIM precursor, which is derived from phosphatidic acid. Is also able to phosphorylate other various amphipathic lipids of host and bacterial origin in vitro, such as ceramide. The sequence is that of Diacylglycerol kinase (dagK) from Mycobacterium tuberculosis (strain CDC 1551 / Oshkosh).